The sequence spans 141 residues: Phosphoribosyl-AMP cyclohydrolase (141 aa).

Aspartate 88 contributes to the Mg(2+) binding site. Cysteine 89 serves as a coordination point for Zn(2+). The Mg(2+) site is built by aspartate 90 and aspartate 92. Zn(2+) contacts are provided by cysteine 109 and cysteine 116.

The protein belongs to the PRA-CH family. Homodimer. Mg(2+) serves as cofactor. It depends on Zn(2+) as a cofactor.

The protein localises to the cytoplasm. It catalyses the reaction 1-(5-phospho-beta-D-ribosyl)-5'-AMP + H2O = 1-(5-phospho-beta-D-ribosyl)-5-[(5-phospho-beta-D-ribosylamino)methylideneamino]imidazole-4-carboxamide. The protein operates within amino-acid biosynthesis; L-histidine biosynthesis; L-histidine from 5-phospho-alpha-D-ribose 1-diphosphate: step 3/9. Catalyzes the hydrolysis of the adenine ring of phosphoribosyl-AMP. The polypeptide is Phosphoribosyl-AMP cyclohydrolase (Paracidovorax citrulli (strain AAC00-1) (Acidovorax citrulli)).